Consider the following 1341-residue polypeptide: MVYSYTEKKRIRKDFGTRPQVLDIPYLLSIQLDSFEKFIEQDPEGQYGLEAAFRSVFPIQSYNGNSELQYVSYRLGEPVFDVKECQIRGVTYSKPLRVKLRLVIFDKDAPAGTVKDIKEQEVYMGEIPLMTENGTFVINGTERVIVSQLHRSPGVFFDSDKGKTHSSGKVLYNARIIPYRGSWLDFEFDPKDNLYVRIDRRRKLPASIILRVLGKTSAEILDIFFEKVNFEVKDQTLMMELVPERLRGETATFDIEADGKVYVEKGRRVTARHIRQLEKDGVNFIEVPVEYIVGKVSAKDYVNEATGELIITANQEISLEALANLSQAGYKKLEVLFTNDLDHGPFMSETLRVDSTTDRISALVEIYRMMRPGEPPTKEAAESLFESLFFSAERYDLSTVGRMKFNSSIGREDAEEQGTLDEVDIIEVMKKLISIRNGKGEVDDIDHLGNRRIRSVGEMAENQFRVGLVRVERAVKERLSLGDLDNVMPQDLINAKPISAAVKEFFGSSQLSQFMDQNNPLSEVTHKRRISALGPGGLTRERAGFEVRDVHVTHYGRLCPIETPEGPNIGLINSLSAFARCNEYGFLETPYRRVVNGVVTDEVDYLSAIEEGQFVIAQANAKLTEEGGFADELVTARQKGESGLHPREHVDYMDVATNQVVSIAASLIPFLEHDDANRALMGANMQRQAVPTLRSEKPLVGTGIERNVAVDSGVTAVAKRGGVIQSVDASRIVVKVNEEELIPGEAGIDIYNLTKYTRSNQNTCINQRPCVMPGEPVARGDVLADGPSTDLGELALGQNMRIAFMPWNGYNFEDSILVSERVVQDDRFTTIHIQELSCVARDTKLGAEEITADIPNVGEAALSKLDESGIVYIGAEVKGGDILVGKVTPKGETQLTPEEKLLRAIFGEKASDVKDTSLRVPNSVAGTVIDVQVFTRDGVEKDKRALEIEQMQLKEAKKDLTEEFQILEGGLLARVRSVLLAGGYTEAKLSSIERKKWLEQTLENEELQNQLEQLAEQYDELKADFDKKFEAKRRKITQGDDLAPGVLKIVKVYLAVKRRIQPGDKMAGRHGNKGVISKINPVEDMPYDENGQPVDIVLNPLGVPSRMNIGQILEVHLGLAAKGIGDKINQMIKEQQELAKLREFLQKVYDLGDTRQRVDISELSDEDVRTLAHNLRAGLPVATPVFDGAPESSIKAMLELADLPASGQLTLFDGRTGDAFERPVTVGYMYMLKLNHLVDDKMHARSTGSYSLVTQQPLGGKAQFGGQRFGEMEVWALEAYGAAYTLQEMLTVKSDDVNGRTKMYKNIVDGNHAMEPGMPESFNVLLKEIRSLGINIELEDE.

The protein belongs to the RNA polymerase beta chain family. The RNAP catalytic core consists of 2 alpha, 1 beta, 1 beta' and 1 omega subunit. When a sigma factor is associated with the core the holoenzyme is formed, which can initiate transcription.

It carries out the reaction RNA(n) + a ribonucleoside 5'-triphosphate = RNA(n+1) + diphosphate. Functionally, DNA-dependent RNA polymerase catalyzes the transcription of DNA into RNA using the four ribonucleoside triphosphates as substrates. The chain is DNA-directed RNA polymerase subunit beta from Vibrio cholerae serotype O1 (strain ATCC 39541 / Classical Ogawa 395 / O395).